A 397-amino-acid chain; its full sequence is HTH-type transcriptional regulator GalR (397 aa).

HTH lysR-type domains lie at 7–64 (PNLM…MRLT) and 99–156 (FQAR…LQPT). 2 DNA-binding regions (H-T-H motif) span residues 24–43 (VSRA…RAIA) and 116–135 (MQTV…AALK).

This sequence belongs to the LysR transcriptional regulatory family.

Transcriptional regulator for the galBCD and galTAP operons, encoding genes of the gallate degradation pathway. In Pseudomonas putida (strain ATCC 47054 / DSM 6125 / CFBP 8728 / NCIMB 11950 / KT2440), this protein is HTH-type transcriptional regulator GalR (galR).